A 1035-amino-acid polypeptide reads, in one-letter code: Beta-galactosidase (1035 aa).

Residues asparagine 101 and aspartate 199 each coordinate substrate. Aspartate 199 provides a ligand contact to Na(+). Mg(2+)-binding residues include glutamate 415, histidine 417, and glutamate 460. Substrate is bound by residues glutamate 460 and 540-543 (EYAH). Glutamate 460 serves as the catalytic Proton donor. The active-site Nucleophile is glutamate 540. Asparagine 600 is a binding site for Mg(2+). Residues phenylalanine 604 and asparagine 607 each coordinate Na(+). The substrate site is built by asparagine 607 and tryptophan 1011.

The protein belongs to the glycosyl hydrolase 2 family. In terms of assembly, homotetramer. Mg(2+) serves as cofactor. Na(+) is required as a cofactor.

It catalyses the reaction Hydrolysis of terminal non-reducing beta-D-galactose residues in beta-D-galactosides.. The polypeptide is Beta-galactosidase (Psychromonas ingrahamii (strain DSM 17664 / CCUG 51855 / 37)).